An 876-amino-acid polypeptide reads, in one-letter code: Valine--tRNA ligase (876 aa).

The 'HIGH' region signature appears at 44–54 (PNVTGKLHLGH). Positions 520–524 (KMSKS) match the 'KMSKS' region motif. Lys-523 provides a ligand contact to ATP. Residues 806 to 876 (EGLIDMDKEI…VKLRINQLKA (71 aa)) are a coiled coil.

The protein belongs to the class-I aminoacyl-tRNA synthetase family. ValS type 1 subfamily. As to quaternary structure, monomer.

It localises to the cytoplasm. It catalyses the reaction tRNA(Val) + L-valine + ATP = L-valyl-tRNA(Val) + AMP + diphosphate. Functionally, catalyzes the attachment of valine to tRNA(Val). As ValRS can inadvertently accommodate and process structurally similar amino acids such as threonine, to avoid such errors, it has a 'posttransfer' editing activity that hydrolyzes mischarged Thr-tRNA(Val) in a tRNA-dependent manner. In Staphylococcus saprophyticus subsp. saprophyticus (strain ATCC 15305 / DSM 20229 / NCIMB 8711 / NCTC 7292 / S-41), this protein is Valine--tRNA ligase.